The chain runs to 221 residues: Deoxyribose-phosphate aldolase (221 aa).

D89 serves as the catalytic Proton donor/acceptor. Residue K151 is the Schiff-base intermediate with acetaldehyde of the active site. K180 (proton donor/acceptor) is an active-site residue.

This sequence belongs to the DeoC/FbaB aldolase family. DeoC type 1 subfamily.

It is found in the cytoplasm. The enzyme catalyses 2-deoxy-D-ribose 5-phosphate = D-glyceraldehyde 3-phosphate + acetaldehyde. It functions in the pathway carbohydrate degradation; 2-deoxy-D-ribose 1-phosphate degradation; D-glyceraldehyde 3-phosphate and acetaldehyde from 2-deoxy-alpha-D-ribose 1-phosphate: step 2/2. In terms of biological role, catalyzes a reversible aldol reaction between acetaldehyde and D-glyceraldehyde 3-phosphate to generate 2-deoxy-D-ribose 5-phosphate. The chain is Deoxyribose-phosphate aldolase from Brevibacillus brevis (strain 47 / JCM 6285 / NBRC 100599).